Reading from the N-terminus, the 307-residue chain is High-affinity branched-chain amino acid transport system permease protein BraD (307 aa).

The next 10 helical transmembrane spans lie at 21–41, 45–65, 70–90, 104–124, 132–152, 154–174, 203–223, 224–244, 245–265, and 280–300; these read YALI…INFA, VYMI…MMGL, LMML…GYSI, LIPL…VMLS, IPTL…GVVI, YMQI…TLFI, IIAL…VLLG, MQYG…AFTA, AVLG…LLGV, and DVVA…GILG.

The protein belongs to the binding-protein-dependent transport system permease family. LivHM subfamily.

It is found in the cell inner membrane. Component of the high affinity leucine, isoleucine, valine, transport system (LIV-I), which is operative without Na(+) and is specific for alanine and threonine, in addition to branched-chain amino acids. The sequence is that of High-affinity branched-chain amino acid transport system permease protein BraD (braD) from Pseudomonas aeruginosa (strain ATCC 15692 / DSM 22644 / CIP 104116 / JCM 14847 / LMG 12228 / 1C / PRS 101 / PAO1).